A 259-amino-acid polypeptide reads, in one-letter code: Phosphatidylglycerol--prolipoprotein diacylglyceryl transferase (259 aa).

Transmembrane regions (helical) follow at residues 12 to 32 (LSLHWYAVCILVGLLLAVYLA), 46 to 66 (IIDFILIAFPLAIIGARIYYV), 83 to 103 (IWNGGIAIYGGLITGTIVLFV), and 109 to 129 (VLNPIHFLDIAAPSVMLAQAI). A 1,2-diacyl-sn-glycero-3-phospho-(1'-sn-glycerol) is bound at residue R131. 3 helical membrane passes run 167-187 (VPTFLYESMWNLIGFVIIMVW), 194-214 (LLDGDILSFYLIWYGCGRLVI), and 226-246 (GIRVSQYVSVLLIVIAIVFIF).

The protein belongs to the Lgt family.

The protein resides in the cell membrane. The enzyme catalyses L-cysteinyl-[prolipoprotein] + a 1,2-diacyl-sn-glycero-3-phospho-(1'-sn-glycerol) = an S-1,2-diacyl-sn-glyceryl-L-cysteinyl-[prolipoprotein] + sn-glycerol 1-phosphate + H(+). The protein operates within protein modification; lipoprotein biosynthesis (diacylglyceryl transfer). Functionally, catalyzes the transfer of the diacylglyceryl group from phosphatidylglycerol to the sulfhydryl group of the N-terminal cysteine of a prolipoprotein, the first step in the formation of mature lipoproteins. This chain is Phosphatidylglycerol--prolipoprotein diacylglyceryl transferase, found in Streptococcus equi subsp. zooepidemicus (strain MGCS10565).